A 289-amino-acid polypeptide reads, in one-letter code: Diaminopimelate epimerase (289 aa).

3 residues coordinate substrate: Asn13, Gln47, and Asn67. Cys76 (proton donor) is an active-site residue. Substrate contacts are provided by residues 77-78 (GN), Asn167, Asn200, and 218-219 (ER). Catalysis depends on Cys227, which acts as the Proton acceptor. 228–229 (GT) serves as a coordination point for substrate.

It belongs to the diaminopimelate epimerase family. Homodimer.

The protein resides in the cytoplasm. The catalysed reaction is (2S,6S)-2,6-diaminopimelate = meso-2,6-diaminopimelate. It participates in amino-acid biosynthesis; L-lysine biosynthesis via DAP pathway; DL-2,6-diaminopimelate from LL-2,6-diaminopimelate: step 1/1. Its function is as follows. Catalyzes the stereoinversion of LL-2,6-diaminopimelate (L,L-DAP) to meso-diaminopimelate (meso-DAP), a precursor of L-lysine and an essential component of the bacterial peptidoglycan. The protein is Diaminopimelate epimerase of Burkholderia vietnamiensis (strain G4 / LMG 22486) (Burkholderia cepacia (strain R1808)).